A 395-amino-acid polypeptide reads, in one-letter code: Probable sugar efflux transporter (395 aa).

The next 12 membrane-spanning stretches (helical) occupy residues 13–33 (VVSL…PVAL), 48–68 (VGLI…PCML), 82–102 (IFIL…YWVL), 107–127 (IGVA…VVRL), 134–154 (AQAL…GLPL), 168–188 (FVLI…LLPV), 207–227 (PALL…FTAY), 244–264 (FTTI…MLFS), 272–292 (AGFL…LLPL), 297–317 (WSLS…SLGM), 331–351 (VAMA…ALLG), and 363–383 (IGYM…FTFV).

It belongs to the major facilitator superfamily. SotB (TC 2.A.1.2) family.

It is found in the cell inner membrane. Its function is as follows. Involved in the efflux of sugars. The physiological role may be the reduction of the intracellular concentration of toxic sugars or sugar metabolites. In Pectobacterium atrosepticum (strain SCRI 1043 / ATCC BAA-672) (Erwinia carotovora subsp. atroseptica), this protein is Probable sugar efflux transporter.